Consider the following 368-residue polypeptide: Phosphate acyltransferase (368 aa).

The disordered stretch occupies residues 334 to 368 (AAPLGESGRDANGAGQASPSAGQPAEPSAALSSKT).

The protein belongs to the PlsX family. In terms of assembly, homodimer. Probably interacts with PlsY.

It localises to the cytoplasm. It catalyses the reaction a fatty acyl-[ACP] + phosphate = an acyl phosphate + holo-[ACP]. The protein operates within lipid metabolism; phospholipid metabolism. Functionally, catalyzes the reversible formation of acyl-phosphate (acyl-PO(4)) from acyl-[acyl-carrier-protein] (acyl-ACP). This enzyme utilizes acyl-ACP as fatty acyl donor, but not acyl-CoA. The polypeptide is Phosphate acyltransferase (Burkholderia pseudomallei (strain 1106a)).